Consider the following 209-residue polypeptide: dITP/XTP pyrophosphatase (209 aa).

Residue 7–12 coordinates substrate; it reads TGNKGK. The active-site Proton acceptor is the aspartate 73. Residue aspartate 73 participates in Mg(2+) binding. Residues serine 74, 155-158, lysine 178, and 183-184 each bind substrate; these read FGYD and HR.

Belongs to the HAM1 NTPase family. As to quaternary structure, homodimer. Requires Mg(2+) as cofactor.

It catalyses the reaction XTP + H2O = XMP + diphosphate + H(+). It carries out the reaction dITP + H2O = dIMP + diphosphate + H(+). The catalysed reaction is ITP + H2O = IMP + diphosphate + H(+). In terms of biological role, pyrophosphatase that catalyzes the hydrolysis of nucleoside triphosphates to their monophosphate derivatives, with a high preference for the non-canonical purine nucleotides XTP (xanthosine triphosphate), dITP (deoxyinosine triphosphate) and ITP. Seems to function as a house-cleaning enzyme that removes non-canonical purine nucleotides from the nucleotide pool, thus preventing their incorporation into DNA/RNA and avoiding chromosomal lesions. The chain is dITP/XTP pyrophosphatase from Sulfurovum sp. (strain NBC37-1).